We begin with the raw amino-acid sequence, 421 residues long: UDP-N-acetylglucosamine 1-carboxyvinyltransferase (421 aa).

Residue 26–27 (KN) participates in phosphoenolpyruvate binding. UDP-N-acetyl-alpha-D-glucosamine is bound at residue Arg96. The Proton donor role is filled by Asp120. UDP-N-acetyl-alpha-D-glucosamine contacts are provided by Asp308 and Val330.

Belongs to the EPSP synthase family. MurA subfamily.

Its subcellular location is the cytoplasm. It catalyses the reaction phosphoenolpyruvate + UDP-N-acetyl-alpha-D-glucosamine = UDP-N-acetyl-3-O-(1-carboxyvinyl)-alpha-D-glucosamine + phosphate. The protein operates within cell wall biogenesis; peptidoglycan biosynthesis. In terms of biological role, cell wall formation. Adds enolpyruvyl to UDP-N-acetylglucosamine. This chain is UDP-N-acetylglucosamine 1-carboxyvinyltransferase, found in Corynebacterium efficiens (strain DSM 44549 / YS-314 / AJ 12310 / JCM 11189 / NBRC 100395).